The chain runs to 465 residues: ATP-dependent protease ATPase subunit HslU (465 aa).

ATP is bound by residues V18, 60–65, D277, E342, and R414; that span reads GVGKTE.

This sequence belongs to the ClpX chaperone family. HslU subfamily. As to quaternary structure, a double ring-shaped homohexamer of HslV is capped on each side by a ring-shaped HslU homohexamer. The assembly of the HslU/HslV complex is dependent on binding of ATP.

The protein resides in the cytoplasm. ATPase subunit of a proteasome-like degradation complex; this subunit has chaperone activity. The binding of ATP and its subsequent hydrolysis by HslU are essential for unfolding of protein substrates subsequently hydrolyzed by HslV. HslU recognizes the N-terminal part of its protein substrates and unfolds these before they are guided to HslV for hydrolysis. The sequence is that of ATP-dependent protease ATPase subunit HslU from Caldicellulosiruptor saccharolyticus (strain ATCC 43494 / DSM 8903 / Tp8T 6331).